Here is a 571-residue protein sequence, read N- to C-terminus: Proline--tRNA ligase (571 aa).

It belongs to the class-II aminoacyl-tRNA synthetase family. ProS type 1 subfamily. As to quaternary structure, homodimer.

It localises to the cytoplasm. The enzyme catalyses tRNA(Pro) + L-proline + ATP = L-prolyl-tRNA(Pro) + AMP + diphosphate. In terms of biological role, catalyzes the attachment of proline to tRNA(Pro) in a two-step reaction: proline is first activated by ATP to form Pro-AMP and then transferred to the acceptor end of tRNA(Pro). As ProRS can inadvertently accommodate and process non-cognate amino acids such as alanine and cysteine, to avoid such errors it has two additional distinct editing activities against alanine. One activity is designated as 'pretransfer' editing and involves the tRNA(Pro)-independent hydrolysis of activated Ala-AMP. The other activity is designated 'posttransfer' editing and involves deacylation of mischarged Ala-tRNA(Pro). The misacylated Cys-tRNA(Pro) is not edited by ProRS. The polypeptide is Proline--tRNA ligase (Shewanella sp. (strain W3-18-1)).